The chain runs to 371 residues: MRVGIPTETKNNEFRVAITPAGVAELTRRGHEVLIQAGAGEGSAITDADFKAAGAQLVGTADQVWADADLLLKVKEPIAAEYGRLRHGQILFTFLHLAASRACTDALLDSGTTSIAYETVQTADGALPLLAPMSEVAGRLAAQVGAYHLMRTQGGRGVLMGGVPGVEPADVVVIGAGTAGYNAARIANGMGATVTVLDINIDKLRQLDAEFCGRIHTRYSSAYELEGAVKRADLVIGAVLVPGAKAPKLVSNSLVAHMKPGAVLVDIAIDQGGCFEGSRPTTYDHPTFAVHDTLFYCVANMPASVPKTSTYALTNATMPYVLELADHGWRAACRSNPALAKGLSTHEGALLSERVATDLGVPFTEPASVLA.

Substrate-binding residues include Arg15 and Lys75. His96 serves as the catalytic Proton donor/acceptor. NAD(+) is bound by residues Ser134, 178 to 179 (TA), Asp198, Lys203, Ser220, 239 to 240 (VL), 267 to 270 (IAID), Arg279, and 298 to 301 (VANM). Asp270 (proton donor/acceptor) is an active-site residue. Mg(2+) contacts are provided by Glu323 and His327.

This sequence belongs to the AlaDH/PNT family. Homohexamer. Trimer of dimers. It depends on Mg(2+) as a cofactor.

It localises to the secreted. The enzyme catalyses L-alanine + NAD(+) + H2O = pyruvate + NH4(+) + NADH + H(+). It functions in the pathway amino-acid degradation; L-alanine degradation via dehydrogenase pathway; NH(3) and pyruvate from L-alanine: step 1/1. Its activity is regulated as follows. Inhibited by CuSO(4) and ZnCl(2). Catalyzes the reversible reductive amination of pyruvate to L-alanine. However, since the physiological environment of M.tuberculosis has a neutral pH, it can be assumed that the enzyme catalyzes exclusively the formation of L-alanine. May play a role in cell wall synthesis as L-alanine is an important constituent of the peptidoglycan layer. This Mycobacterium tuberculosis (strain ATCC 25618 / H37Rv) protein is Alanine dehydrogenase (ald).